The sequence spans 327 residues: GTPase Obg (327 aa).

Positions methionine 1 to isoleucine 159 constitute an Obg domain. The OBG-type G domain maps to alanine 160–serine 327. GTP-binding positions include glycine 166–serine 173, phenylalanine 191–asparagine 195, aspartate 212–glycine 215, asparagine 279–aspartate 282, and serine 308–leucine 310. Mg(2+) contacts are provided by serine 173 and threonine 193.

The protein belongs to the TRAFAC class OBG-HflX-like GTPase superfamily. OBG GTPase family. In terms of assembly, monomer. Mg(2+) is required as a cofactor.

The protein resides in the cytoplasm. Its function is as follows. An essential GTPase which binds GTP, GDP and possibly (p)ppGpp with moderate affinity, with high nucleotide exchange rates and a fairly low GTP hydrolysis rate. Plays a role in control of the cell cycle, stress response, ribosome biogenesis and in those bacteria that undergo differentiation, in morphogenesis control. This is GTPase Obg from Pelagibacter ubique (strain HTCC1062).